The primary structure comprises 225 residues: uncharacterized protein (225 aa).

This is an uncharacterized protein from Dictyostelium discoideum (Social amoeba).